We begin with the raw amino-acid sequence, 144 residues long: Large ribosomal subunit protein uL16 (144 aa).

This sequence belongs to the universal ribosomal protein uL16 family. As to quaternary structure, part of the 50S ribosomal subunit.

In terms of biological role, binds 23S rRNA and is also seen to make contacts with the A and possibly P site tRNAs. This chain is Large ribosomal subunit protein uL16, found in Bacillus cereus (strain ATCC 10987 / NRS 248).